The primary structure comprises 394 residues: Probable 6-phosphogluconolactonase ARB_02015 (394 aa).

An N-terminal signal peptide occupies residues 1 to 21 (MKTVPFLSLLQAGILTSGIVA). Asparagine 51 carries N-linked (GlcNAc...) asparagine glycosylation.

This sequence belongs to the cycloisomerase 2 family.

The protein localises to the secreted. It carries out the reaction 6-phospho-D-glucono-1,5-lactone + H2O = 6-phospho-D-gluconate + H(+). It participates in carbohydrate degradation; pentose phosphate pathway; D-ribulose 5-phosphate from D-glucose 6-phosphate (oxidative stage): step 2/3. Functionally, catalyzes the hydrolysis of 6-phosphogluconolactone to 6-phosphogluconate. The chain is Probable 6-phosphogluconolactonase ARB_02015 from Arthroderma benhamiae (strain ATCC MYA-4681 / CBS 112371) (Trichophyton mentagrophytes).